A 454-amino-acid polypeptide reads, in one-letter code: tRNA modification GTPase MnmE (454 aa).

Residues arginine 23, glutamate 80, and lysine 120 each contribute to the (6S)-5-formyl-5,6,7,8-tetrahydrofolate site. The 162-residue stretch at 216–377 (GMKVVIAGRP…LRNHLKQSMG (162 aa)) folds into the TrmE-type G domain. A K(+)-binding site is contributed by asparagine 226. GTP contacts are provided by residues 226 to 231 (NAGKSS), 245 to 251 (TDIAGTT), 270 to 273 (DTAG), 335 to 338 (NKAD), and 358 to 360 (SAR). Residue serine 230 participates in Mg(2+) binding. K(+) contacts are provided by threonine 245, isoleucine 247, and threonine 250. Threonine 251 lines the Mg(2+) pocket. Lysine 454 provides a ligand contact to (6S)-5-formyl-5,6,7,8-tetrahydrofolate.

It belongs to the TRAFAC class TrmE-Era-EngA-EngB-Septin-like GTPase superfamily. TrmE GTPase family. As to quaternary structure, homodimer. Heterotetramer of two MnmE and two MnmG subunits. K(+) is required as a cofactor.

The protein resides in the cytoplasm. Exhibits a very high intrinsic GTPase hydrolysis rate. Involved in the addition of a carboxymethylaminomethyl (cmnm) group at the wobble position (U34) of certain tRNAs, forming tRNA-cmnm(5)s(2)U34. The protein is tRNA modification GTPase MnmE of Klebsiella pneumoniae subsp. pneumoniae (strain ATCC 700721 / MGH 78578).